A 385-amino-acid polypeptide reads, in one-letter code: UPF0764 protein C16orf89 homolog (385 aa).

An N-terminal signal peptide occupies residues 1-20; that stretch reads MARLGLLLLLLLALPPHFSS. The tract at residues 344–385 is disordered; that stretch reads AHPEYYPNHGDPYSSSQSPASNYQDGAAGPDVQRTGRPLSVS. Residues 356-367 are compositionally biased toward polar residues; sequence YSSSQSPASNYQ.

Belongs to the UPF0764 family. Homodimer. Post-translationally, glycosylated. In terms of tissue distribution, predominantly expressed in thyroid tissue.

The protein localises to the secreted. This is UPF0764 protein C16orf89 homolog from Mus musculus (Mouse).